Reading from the N-terminus, the 278-residue chain is 4-deoxy-L-threo-5-hexosulose-uronate ketol-isomerase (278 aa).

Zn(2+)-binding residues include His-196, His-198, Glu-203, and His-245.

Belongs to the KduI family. Zn(2+) is required as a cofactor.

The enzyme catalyses 5-dehydro-4-deoxy-D-glucuronate = 3-deoxy-D-glycero-2,5-hexodiulosonate. It participates in glycan metabolism; pectin degradation; 2-dehydro-3-deoxy-D-gluconate from pectin: step 4/5. Functionally, catalyzes the isomerization of 5-dehydro-4-deoxy-D-glucuronate to 3-deoxy-D-glycero-2,5-hexodiulosonate. This chain is 4-deoxy-L-threo-5-hexosulose-uronate ketol-isomerase, found in Salmonella paratyphi A (strain ATCC 9150 / SARB42).